The following is a 278-amino-acid chain: Envelope glycoprotein L (278 aa).

The signal sequence occupies residues 1–30 (MCRRPDCGFSFSPGPVILLWCCLLLPIVSS). Residues 43-256 (VPAECPELTR…DKYYAGLPPE (214 aa)) form the gL betaherpesvirus-type domain. The cysteines at positions 154 and 159 are disulfide-linked.

Belongs to the herpesviridae glycoprotein L (gL) family. Betaherpesvirinae gL subfamily. Interacts with glycoprotein H (gH); this interaction is necessary for the correct processing and cell surface expression of gH. Forms the envelope pentamer complex (PC) composed of gH, gL, UL128, UL130, and UL131A. The pentamer interacts with host NRP2. Forms the envelope trimer complex composed of gH, gL, and gO. The trimer interacts with host PDGFRA. The trimer also interacts with host EPHA2.

Its subcellular location is the virion membrane. The protein localises to the host cell membrane. It is found in the host Golgi apparatus. It localises to the host trans-Golgi network. Functionally, the heterodimer glycoprotein H-glycoprotein L is required for the fusion of viral and plasma membranes leading to virus entry into the host cell. Acts as a functional inhibitor of gH and maintains gH in an inhibited form. Upon binding to host integrins, gL dissociates from gH leading to activation of the viral fusion glycoproteins gB and gH. In human cytomegalovirus, forms two distincts complexes to mediate viral entry, a trimer and a pentamer at the surface of the virion envelope. The gH-gL-gO trimer is required for infection in fibroblasts by interacting with host PDGFRA, and in glioblastoma cells by interacting with host EPHA2. The gH-gL-UL128-UL130-UL131A pentamer is essential for viral entry in epithelial, endothelial and myeloid cells via interaction with host NRP2. In Human cytomegalovirus (strain 5160) (HHV-5), this protein is Envelope glycoprotein L.